Here is a 253-residue protein sequence, read N- to C-terminus: HTH-type transcriptional repressor DasR (253 aa).

The HTH gntR-type domain maps to 16–86 (RAQRVPKYYR…QGKGTFVAKP (71 aa)). Positions 46-65 (ERTLAAEFDTSRTTVPQALQ) form a DNA-binding region, H-T-H motif.

The protein localises to the cytoplasm. In terms of biological role, global regulator that is part of the nutrient-sensing system. In the absence of glucosamine 6-P (GlcN6P), represses the phosphotransferase system (PTS) specific for the uptake of N-acetylglucosamine (PTSNag), and genes involved in the metabolism of chitin, as well as several genes involved in development, thereby linking carbon availability to morphogenesis. Regulates the dasABC transport operon involved in glucose-related morphogenesis. Essential for development. The chain is HTH-type transcriptional repressor DasR (dasR) from Streptomyces griseus.